We begin with the raw amino-acid sequence, 157 residues long: Glycine-rich RNA-binding protein (157 aa).

Positions 6–84 constitute an RRM domain; sequence YRCFVGGLAW…RNITVNEAQS (79 aa). The disordered stretch occupies residues 70-157; sequence QELDGRNITV…YGGGGGGSRW (88 aa). 2 stretches are compositionally biased toward gly residues: residues 86 to 138 and 145 to 157; these read GSGG…GGYG and DGGY…GSRW.

Functionally, may play a role in the biosynthesis and processing of heterogeneous nuclear RNA and in the maturation of specific mRNAs in response to wounding. The protein is Glycine-rich RNA-binding protein of Daucus carota (Wild carrot).